Consider the following 347-residue polypeptide: SUMO-activating enzyme subunit 1 (347 aa).

The protein belongs to the ubiquitin-activating E1 family. As to quaternary structure, heterodimer of sae1 and uba2/sae2. The heterodimer corresponds to the two domains that are encoded on a single polypeptide chain in ubiquitin-activating enzyme E1. Interacts with ube2i.

It is found in the nucleus. The protein operates within protein modification; protein sumoylation. The heterodimer acts as an E1 ligase for sumo1, sumo2, and sumo3. It mediates ATP-dependent activation of sumo proteins followed by formation of a thioester bond between a sumo protein and a conserved active site cysteine residue on uba2/sae2. The sequence is that of SUMO-activating enzyme subunit 1 (sae1) from Xenopus tropicalis (Western clawed frog).